The primary structure comprises 497 residues: Sestrin homolog (497 aa).

Residues S185 and S190 each carry the phosphoserine modification. The segment covering 226 to 241 (NANPDYDSQTAASSNG) has biased composition (polar residues). Residues 226–255 (NANPDYDSQTAASSNGGAPPDSANAVADGP) are disordered.

This sequence belongs to the sestrin family. Associates with the GATOR2 complex; the interaction is probably direct. Associates with the GATOR1 complex; the interaction is probably indirect and mediated by the GATOR2 complex. Highly expressed in muscle-enriched tissues (at protein level).

It localises to the nucleus. Its subcellular location is the cytoplasm. Its function is as follows. Functions as a negative feedback regulator of mTOR function. This chain is Sestrin homolog, found in Drosophila melanogaster (Fruit fly).